Reading from the N-terminus, the 354-residue chain is MNDSAHIDYARYDHIRPLLWTGDALELLDQRKLPFEVAHVRCDSSDAVAEAIHSLAVRGAPAIGIAAGWGVVLAARDIAADDGSAALQKLEPALLRLNAARPTAVNLAWALMRMRRVLGAAGADWREVIAREAQAIADEDLAANRHMGALGAALIAPGSGVLTHCNTGSLATAGFGTALGVIRAGMAQQRIAKVFAGETRPWLQGARLTVWELHQDGIDATLIADSAASHLMKSGLVQWVIVGADRICANGDTANKIGTYQLAIAARHHGVKFMVVAPSSTVDMATASGDQIEIEQRDPGELFGVGGVRTVADGIHAWNPVFDVTPGDLIDAIVTERGVIAQPDLARMQAAFGS.

Substrate is bound by residues 58-60 (RGA), Arg-101, and Gln-204. Asp-245 functions as the Proton donor in the catalytic mechanism. 255–256 (NK) lines the substrate pocket.

The protein belongs to the eIF-2B alpha/beta/delta subunits family. MtnA subfamily.

It carries out the reaction 5-(methylsulfanyl)-alpha-D-ribose 1-phosphate = 5-(methylsulfanyl)-D-ribulose 1-phosphate. It participates in amino-acid biosynthesis; L-methionine biosynthesis via salvage pathway; L-methionine from S-methyl-5-thio-alpha-D-ribose 1-phosphate: step 1/6. In terms of biological role, catalyzes the interconversion of methylthioribose-1-phosphate (MTR-1-P) into methylthioribulose-1-phosphate (MTRu-1-P). This is Methylthioribose-1-phosphate isomerase from Xanthomonas axonopodis pv. citri (strain 306).